The primary structure comprises 693 residues: MKVFCGRANPTTGSLEWLEEDEHYDYHQEIARSSYADMLHDKDRNIKYYQGIRAAVSRVKDKGQKALVLDIGTGTGLLSMMAVTAGADFCYAVEVFKPMAEAAVKIVEKNGFSDKIKVINKHSTEVTVGPDGDLPCRANILVTELFDTELIGEGALPSYEHAHKHLVQEDCEAVPHRATVYAQLVESKRMWSWNKLFPVRVQTGLGEQLIIPPSELERCPGAPSVYDIQLNQVSPADFTVLSDVLPMFSVDFSKQVSSSAACHSKQFVPLASGQAQVVLSWWDIEMDPEGKIKCTMAPFWAQTDPQELQWRDHWMQCVYFLPQEEPIMQGSPRCLAAHHDDYCVWYSLQRTSPDENNSAYQVRPVCDCQAHLLWNRPRFGEINDQDRTDHYARALRTMLMPGSICLCVSDGSLLSVLAHHLGAEQVFTVESSVASYRLMKRIFKVNHLEDKITVINKRPELLTSADLEGKKVSLLLGEPFFTTSLLPWHNLYFWYVRTSVDQHLAPGAVVMPQAASLHAVIVEFRDLWRIRSPCGDCEGFDVHIMDDMIKHSLDFRESREAEPQPLWEYPCRSLSEPRQILTFDFQQPIPQQPMQSRGVMELRRPGKSHGAVLWMEYQLTPDSTVSTGLMNPAEDKGDCCWNPHCKQAVYFLSATLDPSAPLDGPQSVSYAVEFHPLTGDITMEFRLADDTLN.

2 consecutive SAM-dependent MTase PRMT-type domains span residues 14–345 (SLEW…YCVW) and 358–684 (SAYQ…ITME). At Arg-32 the chain carries Omega-N-methylarginine. Catalysis depends on residues Glu-144 and Glu-153.

Belongs to the class I-like SAM-binding methyltransferase superfamily. Protein arginine N-methyltransferase family. PRMT7 subfamily. In terms of assembly, homodimer and heterodimer. Interacts with CTCFL, PRMT5 and SNRPD3.

It localises to the cytoplasm. The protein localises to the cytosol. The protein resides in the nucleus. The catalysed reaction is L-arginyl-[protein] + S-adenosyl-L-methionine = N(omega)-methyl-L-arginyl-[protein] + S-adenosyl-L-homocysteine + H(+). Arginine methyltransferase that can both catalyze the formation of omega-N monomethylarginine (MMA) and symmetrical dimethylarginine (sDMA), with a preference for the formation of MMA. Specifically mediates the symmetrical dimethylation of arginine residues in the small nuclear ribonucleoproteins Sm D1 (SNRPD1) and Sm D3 (SNRPD3); such methylation being required for the assembly and biogenesis of snRNP core particles. Specifically mediates the symmetric dimethylation of histone H4 'Arg-3' to form H4R3me2s. Plays a role in gene imprinting by being recruited by CTCFL at the H19 imprinted control region (ICR) and methylating histone H4 to form H4R3me2s, possibly leading to recruit DNA methyltransferases at these sites. May also play a role in embryonic stem cell (ESC) pluripotency. Also able to mediate the arginine methylation of histone H2A and myelin basic protein (MBP) in vitro; the relevance of such results is however unclear in vivo. This Rattus norvegicus (Rat) protein is Protein arginine N-methyltransferase 7 (Prmt7).